A 271-amino-acid chain; its full sequence is Large ribosomal subunit protein uL2cz/uL2cy (271 aa).

Disordered stretches follow at residues 1–22 and 223–271; these read MAKH…DRQV and PVDH…RRRK.

The protein belongs to the universal ribosomal protein uL2 family. As to quaternary structure, part of the 50S ribosomal subunit.

The protein resides in the plastid. It is found in the chloroplast. The protein is Large ribosomal subunit protein uL2cz/uL2cy (rpl2-A) of Sorghum bicolor (Sorghum).